The primary structure comprises 1238 residues: Virulence sensor protein BvgS (1238 aa).

An N-terminal signal peptide occupies residues 1 to 30 (MPAPHRLYPRSLICLAQALLAWALLAWAPA). Over 33–307 (SQELTLVGKA…REQQWMANHP (275 aa)) the chain is Cytoplasmic. The helical transmembrane segment at 308–331 (VVKVAVLNLFAPFTLFRTDEQFGG) threads the bilayer. Residues 332 to 541 (ISAAVLQLLQ…PRTWYAYRNE (210 aa)) lie on the Periplasmic side of the membrane. A helical transmembrane segment spans residues 542–563 (IYLLIGLGLLSALLFLSWIVYL). The Cytoplasmic segment spans residues 564 to 1238 (RRQIRQRKRA…LEQRPHQGQP (675 aa)). The PAS domain occupies 580–651 (QLEFMRVLID…MHEFLLTRMS (72 aa)). The 57-residue stretch at 652–708 (AEREPRFEDRDVTLHGRTRHVYQWTVPYGDSLGELKGIIGGWIDITERAELLRELHD) folds into the PAC domain. In terms of domain architecture, Histidine kinase spans 726–948 (TMSHEIRTPM…TVSVDLRLTM (223 aa)). Residue His-729 is modified to Phosphohistidine; by autocatalysis. The region spanning 974–1095 (RVLVVDDHKP…ALRQRLNEAA (122 aa)) is the Response regulatory domain. Residue Asp-1023 is modified to 4-aspartylphosphate. One can recognise an HPt domain in the interval 1133-1228 (DEALIRQLLE…AALETQLRAW (96 aa)). Phosphohistidine is present on His-1172.

In terms of processing, activation requires a sequential transfer of a phosphate group from a His in the primary transmitter domain, to an Asp in the receiver domain and to a His in the secondary transmitter domain.

The protein resides in the cell inner membrane. The enzyme catalyses ATP + protein L-histidine = ADP + protein N-phospho-L-histidine.. Functionally, member of the two-component regulatory system BvgS/BvgA. Phosphorylates BvgA via a four-step phosphorelay in response to environmental signals. This is Virulence sensor protein BvgS (bvgS) from Bordetella bronchiseptica (strain ATCC BAA-588 / NCTC 13252 / RB50) (Alcaligenes bronchisepticus).